Reading from the N-terminus, the 570-residue chain is GDP-Man:Man(3)GlcNAc(2)-PP-Dol alpha-1,2-mannosyltransferase (570 aa).

The Lumenal segment spans residues 1-7; the sequence is MKLADFV. The helical transmembrane segment at 8-70 threads the bilayer; it reads TYVFGSLLAG…DFGWKNSSVR (63 aa). Residues 71-200 lie on the Cytoplasmic side of the membrane; sequence RAFILASERP…RLVESKSWPK (130 aa). Positions 201 to 221 form an intramembrane region, helical; the sequence is FTLLGQAYGSIILSIEALTTL. Topologically, residues 222-446 are cytoplasmic; sequence APDYWIDTMG…FGINAMWNEH (225 aa). The helical intramembrane region spans 447 to 467; it reads FGIAVVEYMASGLIPLCHASA. Over 468 to 570 the chain is Cytoplasmic; it reads GPLYDIVVPW…LNLTHNRMFS (103 aa).

Belongs to the glycosyltransferase group 1 family.

Its subcellular location is the endoplasmic reticulum membrane. It carries out the reaction an alpha-D-Man-(1-&gt;3)-[alpha-D-Man-(1-&gt;6)]-beta-D-Man-(1-&gt;4)-beta-D-GlcNAc-(1-&gt;4)-alpha-D-GlcNAc-diphospho-di-trans,poly-cis-dolichol + 2 GDP-alpha-D-mannose = an alpha-D-Man-(1-&gt;2)-alpha-D-Man-(1-&gt;2)-alpha-D-Man-(1-&gt;3)-[alpha-D-Man-(1-&gt;6)]-beta-D-Man-(1-&gt;4)-beta-D-GlcNAc-(1-&gt;4)-alpha-D-GlcNAc-diphospho-di-trans,poly-cis-dolichol + 2 GDP + 2 H(+). The protein operates within protein modification; protein glycosylation. GDP-Man:Man(3)GlcNAc(2)-PP-Dol alpha-1,2-mannosyltransferase that operates in the biosynthetic pathway of dolichol-linked oligosaccharides, the glycan precursors employed in protein asparagine (N)-glycosylation. The assembly of dolichol-linked oligosaccharides begins on the cytosolic side of the endoplasmic reticulum membrane and finishes in its lumen. The sequential addition of sugars to dolichol pyrophosphate produces dolichol-linked oligosaccharides containing fourteen sugars, including two GlcNAcs, nine mannoses and three glucoses. Once assembled, the oligosaccharide is transferred from the lipid to nascent proteins by oligosaccharyltransferases. Catalyzes, on the cytoplasmic face of the endoplasmic reticulum, the addition of the fourth and fifth mannose residues to the dolichol-linked oligosaccharide chain, to produce Man(5)GlcNAc(2)-PP-dolichol core oligosaccharide. This Kluyveromyces lactis (strain ATCC 8585 / CBS 2359 / DSM 70799 / NBRC 1267 / NRRL Y-1140 / WM37) (Yeast) protein is GDP-Man:Man(3)GlcNAc(2)-PP-Dol alpha-1,2-mannosyltransferase (ALG11).